The following is a 76-amino-acid chain: UPF0346 protein OEOE_1017 (76 aa).

Belongs to the UPF0346 family.

In Oenococcus oeni (strain ATCC BAA-331 / PSU-1), this protein is UPF0346 protein OEOE_1017.